Reading from the N-terminus, the 257-residue chain is Thiazole synthase (257 aa).

The active-site Schiff-base intermediate with DXP is the lysine 96. Residues glycine 157, 184–185 (AG), and 206–207 (NT) contribute to the 1-deoxy-D-xylulose 5-phosphate site.

The protein belongs to the ThiG family. In terms of assembly, homotetramer. Forms heterodimers with either ThiH or ThiS.

It is found in the cytoplasm. The catalysed reaction is [ThiS sulfur-carrier protein]-C-terminal-Gly-aminoethanethioate + 2-iminoacetate + 1-deoxy-D-xylulose 5-phosphate = [ThiS sulfur-carrier protein]-C-terminal Gly-Gly + 2-[(2R,5Z)-2-carboxy-4-methylthiazol-5(2H)-ylidene]ethyl phosphate + 2 H2O + H(+). It functions in the pathway cofactor biosynthesis; thiamine diphosphate biosynthesis. Its function is as follows. Catalyzes the rearrangement of 1-deoxy-D-xylulose 5-phosphate (DXP) to produce the thiazole phosphate moiety of thiamine. Sulfur is provided by the thiocarboxylate moiety of the carrier protein ThiS. In vitro, sulfur can be provided by H(2)S. The sequence is that of Thiazole synthase from Bartonella bacilliformis (strain ATCC 35685 / KC583 / Herrer 020/F12,63).